The sequence spans 190 residues: C-type lectin domain family 5 member A (190 aa).

Topologically, residues 1–4 (MNWH) are cytoplasmic. Residues 5-25 (MIISGLIVVVIKVVGMTFFLL) form a helical; Signal-anchor for type II membrane protein membrane-spanning segment. Topologically, residues 26–190 (YFPQVFGKSN…YRWICEMNAK (165 aa)) are extracellular. Asn51, Asn146, and Asn153 each carry an N-linked (GlcNAc...) asparagine glycan. The 107-residue stretch at 80–186 (HQGKCFFFSF…CEVSYRWICE (107 aa)) folds into the C-type lectin domain. 2 cysteine pairs are disulfide-bonded: Cys101-Cys185 and Cys163-Cys177.

As to quaternary structure, monomer. Homodimer. The majority of CLEC5A is expressed as a monomeric form on macrophages. Interacts with TYROBP/DAP12. The interaction with TYROBP is required for CLEC5 cell surface expression. Interacts with HCST/DAP10. Forms a CLEC5A/TYROBP/HCST trimolecular complex depending almost solely on TYROBP. Post-translationally, N-glycosylated. Contains sialic acid residues. As to expression, strong expression in bone marrow cells and thioglycollate-induced neutrophils (at protein level). Expressed on granulocytes and monocytes from bone marrow and peripheral blood. Expressed in macrophage cell line J-774, but not in T-cell lines, B-cell lines, or mast cell lines.

It localises to the cell membrane. Functionally, functions as a positive regulator of osteoclastogenesis. Cell surface receptor that signals via TYROBP. Regulates inflammatory responses. In Mus musculus (Mouse), this protein is C-type lectin domain family 5 member A (Clec5a).